The chain runs to 163 residues: Nucleotide-binding protein YajQ (163 aa).

This sequence belongs to the YajQ family.

Its function is as follows. Nucleotide-binding protein. This Salmonella agona (strain SL483) protein is Nucleotide-binding protein YajQ.